Consider the following 443-residue polypeptide: ATP-dependent protease ATPase subunit HslU (443 aa).

ATP is bound by residues I18, 60–65, D256, E321, and R393; that span reads GVGKTE.

The protein belongs to the ClpX chaperone family. HslU subfamily. A double ring-shaped homohexamer of HslV is capped on each side by a ring-shaped HslU homohexamer. The assembly of the HslU/HslV complex is dependent on binding of ATP.

It is found in the cytoplasm. Its function is as follows. ATPase subunit of a proteasome-like degradation complex; this subunit has chaperone activity. The binding of ATP and its subsequent hydrolysis by HslU are essential for unfolding of protein substrates subsequently hydrolyzed by HslV. HslU recognizes the N-terminal part of its protein substrates and unfolds these before they are guided to HslV for hydrolysis. The protein is ATP-dependent protease ATPase subunit HslU of Salmonella arizonae (strain ATCC BAA-731 / CDC346-86 / RSK2980).